A 231-amino-acid chain; its full sequence is Phosphatidylserine decarboxylase proenzyme (231 aa).

Residue Ser-188 is the Schiff-base intermediate with substrate; via pyruvic acid of the active site. Position 188 is a pyruvic acid (Ser); by autocatalysis (Ser-188).

The protein belongs to the phosphatidylserine decarboxylase family. PSD-A subfamily. In terms of assembly, heterodimer of a large membrane-associated beta subunit and a small pyruvoyl-containing alpha subunit. The cofactor is pyruvate. Post-translationally, is synthesized initially as an inactive proenzyme. Formation of the active enzyme involves a self-maturation process in which the active site pyruvoyl group is generated from an internal serine residue via an autocatalytic post-translational modification. Two non-identical subunits are generated from the proenzyme in this reaction, and the pyruvate is formed at the N-terminus of the alpha chain, which is derived from the carboxyl end of the proenzyme. The post-translation cleavage follows an unusual pathway, termed non-hydrolytic serinolysis, in which the side chain hydroxyl group of the serine supplies its oxygen atom to form the C-terminus of the beta chain, while the remainder of the serine residue undergoes an oxidative deamination to produce ammonia and the pyruvoyl prosthetic group on the alpha chain.

The protein resides in the cell membrane. The catalysed reaction is a 1,2-diacyl-sn-glycero-3-phospho-L-serine + H(+) = a 1,2-diacyl-sn-glycero-3-phosphoethanolamine + CO2. Its pathway is phospholipid metabolism; phosphatidylethanolamine biosynthesis; phosphatidylethanolamine from CDP-diacylglycerol: step 2/2. Catalyzes the formation of phosphatidylethanolamine (PtdEtn) from phosphatidylserine (PtdSer). This chain is Phosphatidylserine decarboxylase proenzyme, found in Rickettsia prowazekii (strain Madrid E).